We begin with the raw amino-acid sequence, 85 residues long: Probable Sec-independent protein translocase protein TatE (85 aa).

A helical membrane pass occupies residues 1–21; the sequence is MEGLSITKLLVVGILIVLLFG. The segment at 64 to 85 is disordered; it reads KTVAETKAASDSQAAASVERKD.

It belongs to the TatA/E family. TatE subfamily.

Its subcellular location is the cell inner membrane. Functionally, part of the twin-arginine translocation (Tat) system that transports large folded proteins containing a characteristic twin-arginine motif in their signal peptide across membranes. TatE shares overlapping functions with TatA. This is Probable Sec-independent protein translocase protein TatE from Yersinia pestis.